We begin with the raw amino-acid sequence, 119 residues long: Anamorsin homolog (119 aa).

Residues 1–15 show a composition bias toward polar residues; the sequence is MSSSATSTQAFSLKT. Disordered stretches follow at residues 1 to 21 and 33 to 119; these read MSSSATSTQAFSLKTRQPIPD and LKQA…TDDV. The [2Fe-2S] cluster site is built by C42, C49, C52, and C54. The tract at residues 42–54 is fe-S binding site A; the sequence is CTTRRRACKNCVC. [4Fe-4S] cluster-binding residues include C81, C84, C92, and C95. 2 short sequence motifs (cx2C motif) span residues 81–84 and 92–95; these read CGNC and CANC. Residues 81 to 95 are fe-S binding site B; that stretch reads CGNCSKGDAFRCANC.

It belongs to the anamorsin family. As to quaternary structure, monomer. [2Fe-2S] cluster is required as a cofactor. [4Fe-4S] cluster serves as cofactor.

The protein resides in the cytoplasm. It is found in the mitochondrion intermembrane space. Its function is as follows. Component of the cytosolic iron-sulfur (Fe-S) protein assembly (CIA) machinery. Required for the maturation of extramitochondrial Fe-S proteins. Part of an electron transfer chain functioning in an early step of cytosolic Fe-S biogenesis, facilitating the de novo assembly of a [4Fe-4S] cluster on the cytosolic Fe-S scaffold complex. Electrons are transferred from NADPH via a FAD- and FMN-containing diflavin oxidoreductase. Together with the diflavin oxidoreductase, also required for the assembly of the diferric tyrosyl radical cofactor of ribonucleotide reductase (RNR), probably by providing electrons for reduction during radical cofactor maturation in the catalytic small subunit. The sequence is that of Anamorsin homolog from Leishmania infantum.